Reading from the N-terminus, the 344-residue chain is Methionine import ATP-binding protein MetN (344 aa).

Positions 2–241 (IELKNIGKQF…PTTQLAQQFI (240 aa)) constitute an ABC transporter domain. 38–45 (GASGAGKS) lines the ATP pocket.

This sequence belongs to the ABC transporter superfamily. Methionine importer (TC 3.A.1.24) family. In terms of assembly, the complex is composed of two ATP-binding proteins (MetN), two transmembrane proteins (MetI) and a solute-binding protein (MetQ).

The protein resides in the cell inner membrane. The enzyme catalyses L-methionine(out) + ATP + H2O = L-methionine(in) + ADP + phosphate + H(+). It catalyses the reaction D-methionine(out) + ATP + H2O = D-methionine(in) + ADP + phosphate + H(+). Its function is as follows. Part of the ABC transporter complex MetNIQ involved in methionine import. Responsible for energy coupling to the transport system. The protein is Methionine import ATP-binding protein MetN of Haemophilus ducreyi (strain 35000HP / ATCC 700724).